A 284-amino-acid chain; its full sequence is D-tagatose-1,6-bisphosphate aldolase subunit GatY (284 aa).

The active-site Proton donor is D82. Zn(2+) contacts are provided by H83 and H180. G181 lines the dihydroxyacetone phosphate pocket. H208 provides a ligand contact to Zn(2+). Dihydroxyacetone phosphate is bound by residues G209–S211 and N230–T233.

It belongs to the class II fructose-bisphosphate aldolase family. TagBP aldolase GatY subfamily. Forms a complex with GatZ. The cofactor is Zn(2+).

It catalyses the reaction D-tagatofuranose 1,6-bisphosphate = D-glyceraldehyde 3-phosphate + dihydroxyacetone phosphate. The protein operates within carbohydrate metabolism; D-tagatose 6-phosphate degradation; D-glyceraldehyde 3-phosphate and glycerone phosphate from D-tagatose 6-phosphate: step 2/2. In terms of biological role, catalytic subunit of the tagatose-1,6-bisphosphate aldolase GatYZ, which catalyzes the reversible aldol condensation of dihydroxyacetone phosphate (DHAP or glycerone-phosphate) with glyceraldehyde 3-phosphate (G3P) to produce tagatose 1,6-bisphosphate (TBP). Requires GatZ subunit for full activity and stability. Is involved in the catabolism of galactitol and D-tagatose. This chain is D-tagatose-1,6-bisphosphate aldolase subunit GatY (gatY), found in Klebsiella oxytoca.